The primary structure comprises 979 residues: Translation initiation factor IF-2 (979 aa).

Residues 68–386 (VKQKQGTPAS…DKRDAASRAA (319 aa)) form a disordered region. 3 stretches are compositionally biased toward basic and acidic residues: residues 102-179 (QDMR…KPEE), 217-229 (EMEKKEDTEEVFR), and 260-273 (TKEDRQREQNDADG). Over residues 317-326 (RPAQQQSNAS) the composition is skewed to polar residues. Over residues 347–356 (DVQRQVKETL) the composition is skewed to basic and acidic residues. A tr-type G domain is found at 478 to 646 (ARPPIVTVMG…KVLLEADILE (169 aa)). The interval 487–494 (GHVDHGKT) is G1. Residue 487–494 (GHVDHGKT) participates in GTP binding. Positions 512-516 (GITQH) are G2. The G3 stretch occupies residues 534-537 (DTPG). GTP is bound by residues 534-538 (DTPGH) and 588-591 (NKID). The segment at 588–591 (NKID) is G4. Residues 624-626 (SAK) are G5.

The protein belongs to the TRAFAC class translation factor GTPase superfamily. Classic translation factor GTPase family. IF-2 subfamily.

It is found in the cytoplasm. One of the essential components for the initiation of protein synthesis. Protects formylmethionyl-tRNA from spontaneous hydrolysis and promotes its binding to the 30S ribosomal subunits. Also involved in the hydrolysis of GTP during the formation of the 70S ribosomal complex. The sequence is that of Translation initiation factor IF-2 from Porphyromonas gingivalis (strain ATCC BAA-308 / W83).